The following is a 392-amino-acid chain: Metallophosphoesterase 1 (392 aa).

Residues 25–45 traverse the membrane as a helical segment; sequence KLAALVFAVVLFCEFLIYYLV. Residues Asp73, Asp115, Asn153, His246, His300, and His302 each contribute to the a divalent metal cation site. A helical transmembrane segment spans residues 352 to 372; that stretch reads DTVLATYCVAAGLLVVLILVH.

Belongs to the metallophosphoesterase superfamily. MPPE1 family. As to quaternary structure, interacts with GPI-anchor proteins (via the GPI portion). Interacts with TMED10. The cofactor is Mn(2+).

It localises to the endoplasmic reticulum-Golgi intermediate compartment membrane. Metallophosphoesterase that catalyzes the removal of a side-chain ethanolamine-phosphate (EtNP) from the second mannose of the GPI-anchor protein intermediate. Participates in the glycan remodeling steps of GPI-anchor maturation to allow an efficient transport of GPI-anchor proteins from the endoplasmic reticulum to the Golgi. This is Metallophosphoesterase 1 from Ailuropoda melanoleuca (Giant panda).